The primary structure comprises 88 residues: MPNIKSAIKRVEITKARTIRNASIKSAVKTAIRRYEEALAKADKEVAETALRNAMVAVDKAVTKGVLHKNAAARKKSRLTKRFNKIAG.

This sequence belongs to the bacterial ribosomal protein bS20 family.

In terms of biological role, binds directly to 16S ribosomal RNA. This is Small ribosomal subunit protein bS20 from Desulforamulus reducens (strain ATCC BAA-1160 / DSM 100696 / MI-1) (Desulfotomaculum reducens).